A 588-amino-acid chain; its full sequence is Cation channel sperm-associated protein 2 (588 aa).

Over 1 to 106 the chain is Cytoplasmic; the sequence is MAQEQGHFQL…LWAGWVLDSS (106 aa). A helical transmembrane segment spans residues 107 to 129; that stretch reads VFSKFIISLIFLNTFVLMVEIEL. The Extracellular segment spans residues 130–138; sequence MESTNTALW. Residues 139–164 form a helical membrane-spanning segment; that stretch reads PVKLALEVADWFILLSFIVEILLMWL. The Cytoplasmic segment spans residues 165–173; sequence ASFSLFWKD. Residues 174 to 198 form a helical membrane-spanning segment; that stretch reads AWNVFDFFVTLLSLLPELVVLLGVP. The Extracellular segment spans residues 199–201; the sequence is AHS. The helical transmembrane segment at 202–220 threads the bilayer; the sequence is VWLQLLRVCRVLRSLKLFA. At 221–237 the chain is on the cytoplasmic side; it reads RFRQIKVILLALVRALK. Residues 238–260 traverse the membrane as a helical segment; it reads SMTFLLMLLLIFFYIFAVTGVYF. The Extracellular portion of the chain corresponds to 261-279; that stretch reads FREYSRSTIEGLEYNMFFS. Residues 280–292 constitute an intramembrane region (helical; Pore-forming); it reads DLLNSLVTVFILF. Residues 293–312 lie on the Extracellular side of the membrane; that stretch reads TLDHWYAVLQDIWKVPESSR. The chain crosses the membrane as a helical span at residues 313 to 339; sequence VFSSIYVILWLLLGSIIFRNIIVAMMV. Topologically, residues 340 to 588 are cytoplasmic; the sequence is TNFQNIRSEL…VQALMSFEDK (249 aa). Residues 376 to 512 form a disordered region; the sequence is SESLRGTSLG…YPVSHSISSH (137 aa). A compositionally biased stretch (acidic residues) spans 390 to 439; that stretch reads DIIETSDASDDDDDDDDDDDDDDDDDDDKSDATESDNEESDSENSESENS. The segment covering 440–502 has biased composition (basic and acidic residues); the sequence is ESEKIDPEKD…KVKEESKEKA (63 aa).

The protein belongs to the cation channel sperm-associated (TC 1.A.1.19) family. As to quaternary structure, component of the CatSper complex or CatSpermasome composed of the core pore-forming members CATSPER1, CATSPER2, CATSPER3 and CATSPER4 as well as auxiliary members CATSPERB, CATSPERG2, CATSPERD, CATSPERE, CATSPERZ, C2CD6/CATSPERT, SLCO6C1, TMEM249, TMEM262 and EFCAB9. HSPA1 may be an additional auxiliary complex member. The core complex members CATSPER1, CATSPER2, CATSPER3 and CATSPER4 form a heterotetrameric channel. The auxiliary CATSPERB, CATSPERG2, CATSPERD and CATSPERE subunits form a pavilion-like structure over the pore which stabilizes the complex through interactions with CATSPER4, CATSPER3, CATSPER1 and CATSPER2 respectively. SLCO6C1 interacts with CATSPERE and TMEM262/CATSPERH interacts with CATSPERB, further stabilizing the complex. C2CD6/CATSPERT interacts at least with CATSPERD and is required for targeting the CatSper complex in the flagellar membrane. Interacts with Ca(v)3.3/CACNA1I, leading to suppression of T-type calcium channel activity. Testis-specific.

The protein resides in the cell projection. It is found in the cilium. The protein localises to the flagellum membrane. It carries out the reaction Ca(2+)(in) = Ca(2+)(out). Its activity is regulated as follows. In contrast to the human ortholog, not activated by progesterone. Activated by intracellular alkalinization. Its function is as follows. Pore-forming subunit of the CatSper complex, a sperm-specific voltage-gated calcium channel that plays a central role in sperm cell hyperactivation. Controls calcium entry to mediate the hyperactivated motility, a step needed for sperm motility which is essential late in the preparation of sperm for fertilization. This is Cation channel sperm-associated protein 2 (Catsper2) from Mus musculus (Mouse).